The primary structure comprises 448 residues: Protein ECM7 (448 aa).

At Met-1–Arg-28 the chain is on the cytoplasmic side. The helical transmembrane segment at Leu-29 to Ser-49 threads the bilayer. Residues Pro-50–Asn-204 are Extracellular-facing. The helical transmembrane segment at Val-205–Trp-225 threads the bilayer. Residues Tyr-226–Asn-246 are Cytoplasmic-facing. A helical transmembrane segment spans residues Ser-247–Val-267. The Extracellular segment spans residues Asn-268 to His-287. The helical transmembrane segment at Leu-288 to Leu-308 threads the bilayer. Residues Ala-309–Phe-448 are Cytoplasmic-facing. Composition is skewed to polar residues over residues Tyr-351–Gly-363 and Val-383–Asn-406. 2 disordered regions span residues Tyr-351–Glu-411 and Arg-427–Phe-448.

It localises to the membrane. Its function is as follows. May be involved in cell wall organization and biogenesis. In Saccharomyces cerevisiae (strain ATCC 204508 / S288c) (Baker's yeast), this protein is Protein ECM7 (ECM7).